A 170-amino-acid chain; its full sequence is ATP synthase subunit b (170 aa).

The helical transmembrane segment at isoleucine 22 to glycine 41 threads the bilayer. The segment at leucine 76–arginine 98 is disordered. Basic and acidic residues predominate over residues aspartate 89 to arginine 98.

This sequence belongs to the ATPase B chain family. As to quaternary structure, F-type ATPases have 2 components, F(1) - the catalytic core - and F(0) - the membrane proton channel. F(1) has five subunits: alpha(3), beta(3), gamma(1), delta(1), epsilon(1). F(0) has four main subunits: a(1), b(1), b'(1) and c(10-14). The alpha and beta chains form an alternating ring which encloses part of the gamma chain. F(1) is attached to F(0) by a central stalk formed by the gamma and epsilon chains, while a peripheral stalk is formed by the delta, b and b' chains.

The protein resides in the cellular thylakoid membrane. F(1)F(0) ATP synthase produces ATP from ADP in the presence of a proton or sodium gradient. F-type ATPases consist of two structural domains, F(1) containing the extramembraneous catalytic core and F(0) containing the membrane proton channel, linked together by a central stalk and a peripheral stalk. During catalysis, ATP synthesis in the catalytic domain of F(1) is coupled via a rotary mechanism of the central stalk subunits to proton translocation. In terms of biological role, component of the F(0) channel, it forms part of the peripheral stalk, linking F(1) to F(0). The polypeptide is ATP synthase subunit b (Prochlorococcus marinus (strain AS9601)).